A 371-amino-acid polypeptide reads, in one-letter code: MPTQMEVEYWRRRYQRMNYERFAAANVIALITHAATQPLDMVRIRSQMLQEGKTFSGLGYQKGWYPFQIMEEIYAAGGGLRKFYSAFDTFFFRTVCYTTARVTAFGYFYDKVNKDPRRVARPDFLVAAGVLGGFIAGVVTNPIDIVYNRMQVDELYPQAARRNYSNTIQGLAKVAEEGALFRGAGANGFKLAAICSSMTNIYDWCKENSYFFFGPHWINRLWGTAVAVAIGTVVSMPFDMIRTRLHTMRPLPNGQMPYNGMIDCFNKIIKYECNSKWMSNFGSFYAGGEAYFLRLFLICYLSQFLVDYYNENYYDQEFWQPQRFHYQSGIDYDIHDPYTDAFNKKLVATYTTATGGMGAAHPSGKENLAII.

3 Solcar repeats span residues 16–111, 120–208, and 215–304; these read RMNY…FYDK, ARPD…CKEN, and PHWI…LSQF. A run of 6 helical transmembrane segments spans residues 22–42, 89–109, 126–146, 184–204, 221–241, and 281–301; these read FAAANVIALITHAATQPLDMV, TFFFRTVCYTTARVTAFGYFY, VAAGVLGGFIAGVVTNPIDIV, AGANGFKLAAICSSMTNIYDW, LWGTAVAVAIGTVVSMPFDMI, and FGSFYAGGEAYFLRLFLICYL.

This sequence belongs to the mitochondrial carrier (TC 2.A.29) family.

The protein resides in the membrane. This Oxytricha fallax protein is Macronuclear solute carrier homolog CR-MSC.